A 225-amino-acid polypeptide reads, in one-letter code: Ribosomal RNA small subunit methyltransferase G (225 aa).

S-adenosyl-L-methionine is bound by residues G96, F101, 146 to 147 (AE), and R160.

The protein belongs to the methyltransferase superfamily. RNA methyltransferase RsmG family.

The protein localises to the cytoplasm. Functionally, specifically methylates the N7 position of a guanine in 16S rRNA. In Mycoplasma mobile (strain ATCC 43663 / 163K / NCTC 11711) (Mesomycoplasma mobile), this protein is Ribosomal RNA small subunit methyltransferase G.